Consider the following 201-residue polypeptide: Recombination protein RecR (201 aa).

Residues 57–72 (CADCRTFTEQEHCTIC) form a C4-type zinc finger. The Toprim domain maps to 81–176 (GQICVVESPA…LASRIAHGVP (96 aa)).

The protein belongs to the RecR family.

Functionally, may play a role in DNA repair. It seems to be involved in an RecBC-independent recombinational process of DNA repair. It may act with RecF and RecO. This Yersinia pestis bv. Antiqua (strain Antiqua) protein is Recombination protein RecR.